The primary structure comprises 83 residues: Large ribosomal subunit protein bL31B (83 aa).

Belongs to the bacterial ribosomal protein bL31 family. Type B subfamily. As to quaternary structure, part of the 50S ribosomal subunit.

Functionally, binds the 23S rRNA. This chain is Large ribosomal subunit protein bL31B, found in Lactobacillus delbrueckii subsp. bulgaricus (strain ATCC 11842 / DSM 20081 / BCRC 10696 / JCM 1002 / NBRC 13953 / NCIMB 11778 / NCTC 12712 / WDCM 00102 / Lb 14).